We begin with the raw amino-acid sequence, 104 residues long: Vegetative-specific protein H7 (104 aa).

Positions 43–97 (IQRARNALKMTQKELAFKINERPGVINEYESGSAIPSQAVLSKLEKALNVKLRGK) constitute an HTH cro/C1-type domain. Residues 54 to 73 (QKELAFKINERPGVINEYES) constitute a DNA-binding region (H-T-H motif).

The sequence is that of Vegetative-specific protein H7 (cinD-1) from Dictyostelium discoideum (Social amoeba).